We begin with the raw amino-acid sequence, 295 residues long: Glycine--tRNA ligase alpha subunit (295 aa).

The protein belongs to the class-II aminoacyl-tRNA synthetase family. As to quaternary structure, tetramer of two alpha and two beta subunits.

Its subcellular location is the cytoplasm. The enzyme catalyses tRNA(Gly) + glycine + ATP = glycyl-tRNA(Gly) + AMP + diphosphate. This is Glycine--tRNA ligase alpha subunit from Prochlorococcus marinus (strain MIT 9215).